The chain runs to 189 residues: Large ribosomal subunit protein bL9 (189 aa).

It belongs to the bacterial ribosomal protein bL9 family.

Functionally, binds to the 23S rRNA. This Methylocella silvestris (strain DSM 15510 / CIP 108128 / LMG 27833 / NCIMB 13906 / BL2) protein is Large ribosomal subunit protein bL9.